The following is a 38-amino-acid chain: Large ribosomal subunit protein bL36 (38 aa).

The protein belongs to the bacterial ribosomal protein bL36 family.

The polypeptide is Large ribosomal subunit protein bL36 (Stutzerimonas stutzeri (strain A1501) (Pseudomonas stutzeri)).